Consider the following 174-residue polypeptide: Crossover junction endodeoxyribonuclease RuvC (174 aa).

Residues aspartate 8, glutamate 67, and aspartate 139 contribute to the active site. Mg(2+)-binding residues include aspartate 8, glutamate 67, and aspartate 139.

It belongs to the RuvC family. As to quaternary structure, homodimer which binds Holliday junction (HJ) DNA. The HJ becomes 2-fold symmetrical on binding to RuvC with unstacked arms; it has a different conformation from HJ DNA in complex with RuvA. In the full resolvosome a probable DNA-RuvA(4)-RuvB(12)-RuvC(2) complex forms which resolves the HJ. The cofactor is Mg(2+).

The protein localises to the cytoplasm. It catalyses the reaction Endonucleolytic cleavage at a junction such as a reciprocal single-stranded crossover between two homologous DNA duplexes (Holliday junction).. Functionally, the RuvA-RuvB-RuvC complex processes Holliday junction (HJ) DNA during genetic recombination and DNA repair. Endonuclease that resolves HJ intermediates. Cleaves cruciform DNA by making single-stranded nicks across the HJ at symmetrical positions within the homologous arms, yielding a 5'-phosphate and a 3'-hydroxyl group; requires a central core of homology in the junction. The consensus cleavage sequence is 5'-(A/T)TT(C/G)-3'. Cleavage occurs on the 3'-side of the TT dinucleotide at the point of strand exchange. HJ branch migration catalyzed by RuvA-RuvB allows RuvC to scan DNA until it finds its consensus sequence, where it cleaves and resolves the cruciform DNA. This Pseudomonas paraeruginosa (strain DSM 24068 / PA7) (Pseudomonas aeruginosa (strain PA7)) protein is Crossover junction endodeoxyribonuclease RuvC.